We begin with the raw amino-acid sequence, 722 residues long: MAEETSNDNLVVQGNEIVPSNGEALAEEVQGDELVLAEDLIQGDEVQGNELVSAEMSIPPTSRRRRKKSLVWEHFTIEAVSGGATRACCKLCKQTFAYSSGSKIAGTSHLKRHITLGSCPKIKNQEHKLLLTPAGGTDNDGEGTVERPSKRRYRYTGYANAAFDQERSCSYLAKMIILHDYPLHIVQQPAFTTFIDSLQPRFRVVDVETMEWEVYAVYQKEKENLMQAFNTMPGRISLAIGLWTTSQTLGYVSLAGQFIDSEWKMHRRMLNFMMVSSPHSENALSEAISTSLSDWNMKDKLFTITLDNDCSSHDIYSANLRDYLSNKNNLMLKGQLFVVRCYAHILNAVAQDVIASIHGVIYNIRESIKFIKASPSCEEKFAEIALQLEIPSTKTLCLDVTTQWNTTYLMLLAALDYKQAFSTLETSDDNYNEAPSAEDWKKVEAACNYLKLLYDSAHSIMAAANPTSNLFFHEAWKLQLELSNATGREDPVFSSIAKDMHERFDKYWKDCNLVLAIAVVMDPRFKMKLVEFSYSKIYGVEAAKYVKVVDDAVHELYNEYVAQPLPLTPAYVEQGGGNNAPASENSTQATAPSTGDGLVDFDMYLSEIATSQPTKSELEQYLDESLTPRIQEFDILNWWKLNTLKYPTLSKMARDILAIPMSMVSSGNSIFSAGTGTRMLDDYRSSSRPEIVEALVCAKDWLQYLPATPEAPSTALVKVDAA.

The BED-type zinc finger occupies 66-126; it reads RKKSLVWEHF…GSCPKIKNQE (61 aa). The Zn(2+) site is built by cysteine 89, cysteine 92, histidine 113, and cysteine 119. Residues 572–592 are disordered; sequence VEQGGGNNAPASENSTQATAP. A compositionally biased stretch (polar residues) spans 580 to 592; sequence APASENSTQATAP. The interval 617–702 is HATC (Hobo-Ac-Tam3) domain; it reads ELEQYLDESL…EALVCAKDWL (86 aa).

Homodimer.

Its subcellular location is the nucleus. In terms of biological role, transposase-like protein that is essential for plant growth and development. May regulate global gene expression by recruiting other cellular factors. The sequence is that of Zinc finger BED domain-containing protein RICESLEEPER 1 from Oryza sativa subsp. japonica (Rice).